The chain runs to 657 residues: Threonine--tRNA ligase (657 aa).

The TGS domain maps to 7 to 70 (ILAVIALTLP…TADAAIEIIT (64 aa)). A catalytic region spans residues 253–555 (DHRKLGAELE…LIEHTAGNFP (303 aa)). Residues C351, H402, and H532 each coordinate Zn(2+).

Belongs to the class-II aminoacyl-tRNA synthetase family. Homodimer. Requires Zn(2+) as cofactor.

It localises to the cytoplasm. The catalysed reaction is tRNA(Thr) + L-threonine + ATP = L-threonyl-tRNA(Thr) + AMP + diphosphate + H(+). Functionally, catalyzes the attachment of threonine to tRNA(Thr) in a two-step reaction: L-threonine is first activated by ATP to form Thr-AMP and then transferred to the acceptor end of tRNA(Thr). Also edits incorrectly charged L-seryl-tRNA(Thr). This Pelodictyon phaeoclathratiforme (strain DSM 5477 / BU-1) protein is Threonine--tRNA ligase.